We begin with the raw amino-acid sequence, 362 residues long: Serine/threonine-protein kinase ZRK4 (362 aa).

The segment at 1 to 23 (MNDQKMSCWRKKSKKKNSEANQR) is disordered. The region spanning 35 to 362 (LEDLIELCNG…KELKRIERWT (328 aa)) is the Protein kinase domain. ATP is bound by residues 41–49 (LCNGKSNPI) and lysine 89. Aspartate 185 (proton acceptor) is an active-site residue.

It belongs to the protein kinase superfamily. Ser/Thr protein kinase family. ZRK subfamily.

It catalyses the reaction L-seryl-[protein] + ATP = O-phospho-L-seryl-[protein] + ADP + H(+). It carries out the reaction L-threonyl-[protein] + ATP = O-phospho-L-threonyl-[protein] + ADP + H(+). The polypeptide is Serine/threonine-protein kinase ZRK4 (Arabidopsis thaliana (Mouse-ear cress)).